The chain runs to 342 residues: MNDTTAKTLNCSPASRDGFPETLGDFGRTRVDLPVVLVAGPTGVGKTAFAVELARALGSEIVNADSMQVYRHMDIGTAKPTPRERSAVPHHLIDIVDPDEPFDAGDYLARARPVIATLHEAGKVPIVVGGTGLYLKVLTRGICAGAPGDPDVRRRLIEEELTLGLPALHERLRDVDPPLGARIHPNDRQRILRALEVFHHSGKPLSYWQRQHRFEDAPYRTLKIFLHRPREVLYARINDRVDAMMAQGFLDEVRNLLAMGCGPELKPMQSLGYRQMARHLRGEMSLDEAVNEIRRDTRRYAKRQLTWFRADPEYRWFDAADTHGLVARIVRETPDLHDNRLR.

The segment covering 1–13 (MNDTTAKTLNCSP) has biased composition (polar residues). The tract at residues 1–21 (MNDTTAKTLNCSPASRDGFPE) is disordered. 40 to 47 (GPTGVGKT) is a binding site for ATP. A substrate-binding site is contributed by 42 to 47 (TGVGKT). Interaction with substrate tRNA regions lie at residues 65 to 68 (DSMQ) and 189 to 193 (QRILR).

Belongs to the IPP transferase family. Monomer. Mg(2+) is required as a cofactor.

It carries out the reaction adenosine(37) in tRNA + dimethylallyl diphosphate = N(6)-dimethylallyladenosine(37) in tRNA + diphosphate. Catalyzes the transfer of a dimethylallyl group onto the adenine at position 37 in tRNAs that read codons beginning with uridine, leading to the formation of N6-(dimethylallyl)adenosine (i(6)A). The polypeptide is tRNA dimethylallyltransferase (Syntrophobacter fumaroxidans (strain DSM 10017 / MPOB)).